A 275-amino-acid chain; its full sequence is Adenylate kinase 2 (275 aa).

The N-myristoyl glycine moiety is linked to residue Gly2. Residues 21–30 (KKKEKKKKKK) are required for cell membrane translocation but dispensable for cell membrane localization. Position 39–44 (39–44 (GSGKDT)) interacts with ATP. An NMP region spans residues 59–97 (CISKLLKEYKEEYNKENVLNEEENYFDEIEKCMIDGSLV). Residues 95–97 (SLV), 126–129 (GFPR), and Gln133 each bind AMP. Arg164 is a binding site for ATP. Residues 165-214 (IIDPITNISYNENIIQIIKKKREGQELSDKEQKQLIIDNHLYNNLSNDIL) form an LID region. Residues Arg220 and Arg231 each coordinate AMP.

Belongs to the adenylate kinase family. In terms of assembly, monomer. Oligomer. Heterodimer composed of NMT and AK2; AK2 myristoylation stabilizes the complex. Myristoylation is required for cell membrane localization. Post-translationally, may be palmitoylated at Cys-4 which stabilizes cell membrane localization of the myristoylated protein.

The protein localises to the parasitophorous vacuole membrane. It carries out the reaction AMP + ATP = 2 ADP. Functionally, catalyzes the reversible transfer of the terminal phosphate group between ATP and AMP. Has very low activity with CTP, GTP, ITP and UTP and no activity with GMP, UMP or IMP in vitro. The sequence is that of Adenylate kinase 2 from Plasmodium falciparum (isolate 3D7).